A 399-amino-acid chain; its full sequence is Alpha-ketoglutarate-dependent dioxygenase fc-dox (399 aa).

2 residues coordinate Fe cation: H158 and D160. Position 203 (T203) interacts with 2-oxoglutarate. A Fe cation-binding site is contributed by H355. R367 contributes to the 2-oxoglutarate binding site. The tract at residues 371–399 is disordered; that stretch reads QGWLAGDRPPKGPVPIPDPRARSSIYYQK.

The protein belongs to the TfdA dioxygenase family. Fe(2+) is required as a cofactor.

Its pathway is mycotoxin biosynthesis. In terms of biological role, alpha-ketoglutarate-dependent dioxygenase; part of the 2 gene clusters that mediate the biosynthesis of fusicoccins, diterpene glucosides that display phytohormone-like activity and function as potent activators of plasma membrane H(+)-ATPases in plants by modifying 14-3-3 proteins and cause the plant disease constriction canker. The first step in the pathway is performed by the fusicoccadiene synthase PaFS that possesses both prenyl transferase and terpene cyclase activity, converting isopentenyl diphosphate and dimethylallyl diphosphate into geranylgeranyl diphosphate (GGDP) and successively converting GGDP into fusicocca-2,10(14)-diene, a precursor for fusicoccin H. The second step is the oxidation at the C-8 position by the cytochrome P450 monooxygenase PaP450-2 to yield fusicocca-2,10(14)-diene-8-beta-ol. The cytochrome P450 monooxygenase PaP450-1 then catalyzes the hydroxylation at the C-16 position to produce fusicocca-2,10(14)-diene-8-beta,16-diol. The dioxygenase fc-dox then catalyzes the 16-oxydation of fusicocca-2,10(14)-diene-8-beta,16-diol to yield an aldehyde (8-beta-hydroxyfusicocca-1,10(14)-dien-16-al). The short-chain dehydrogenase/reductase fc-sdr catalyzes the reduction of the aldehyde to yield fusicocca-1,10(14)-diene-8-beta,16-diol. The next step is the hydroxylation at C-9 performed by the cytochrome P450 monooxygenase PaP450-3 that leads to fusicoccin H aglycon which is glycosylated to fusicoccin H by the O-glycosyltransferase PaGT. Hydroxylation at C-12 by the cytochrome P450 monooxygenase PaP450-4 leads then to the production of fusicoccin Q and is followed by methylation by the O-methyltransferase PaMT to yield fusicoccin P. Fusicoccin P is further converted to fusicoccin J via prenylation by the O-glucose prenyltransferase PaPT. Cytochrome P450 monooxygenase PaP450-5 then performs hydroxylation at C-19 to yield dideacetyl-fusicoccin A which is acetylated to 3'-O-deacetyl-fusicoccin A by the O-acetyltransferase PaAT-2. Finally, a another acetylation by the O-acetyltransferase PaAT-1 yields fusicoccin A. The chain is Alpha-ketoglutarate-dependent dioxygenase fc-dox from Phomopsis amygdali (Fusicoccum amygdali).